We begin with the raw amino-acid sequence, 161 residues long: MPYTVTSPSQLVYFGSVWADPITFIDLCTVALGNQFQTQNARTTVQQQFSDLFKTVPTRTNRFNDGENGFRVFRYNSTLDPLISALMNSFDTRNRIIEVDNPANPNTSEVASATQRVDDATVNIRACINNLMNELVRGTGMMNTASFETVSNLTWTTTTTT.

The protein belongs to the virgaviridae capsid protein family.

The protein localises to the virion. In terms of biological role, capsid protein self-assembles to form rod-shaped virions about 18 nm in diameter with a central canal enclosing the viral genomic RNA. The polypeptide is Capsid protein (CP) (Tobamovirus Ob).